The sequence spans 291 residues: E3 ubiquitin-protein ligase MARCHF8 (291 aa).

The interval 22–72 (YRSKTKEKEREEQNEKTLGHFMSHSSNISKAGSPPSASAPAPVSSFSRTSI) is disordered. Residues 25–39 (KTKEKEREEQNEKTL) show a composition bias toward basic and acidic residues. Over residues 50–72 (SKAGSPPSASAPAPVSSFSRTSI) the composition is skewed to low complexity. The RING-CH-type zinc-finger motif lies at 72-133 (ITPSSQDICR…ELCKYEFIME (62 aa)). Cys80, Cys83, Cys97, Cys99, His107, Cys110, Cys123, and Cys126 together coordinate Zn(2+). 2 helical membrane passes run 157 to 177 (CSVT…YVLI) and 197 to 217 (FWTK…FMYV). Phosphoserine is present on Ser253.

As to quaternary structure, interacts with CD86. In terms of tissue distribution, broadly expressed. Present in immature dendritic cells (at protein level).

Its subcellular location is the golgi apparatus membrane. It localises to the endoplasmic reticulum membrane. The protein resides in the cytoplasmic vesicle membrane. It is found in the lysosome membrane. The protein localises to the early endosome membrane. It carries out the reaction S-ubiquitinyl-[E2 ubiquitin-conjugating enzyme]-L-cysteine + [acceptor protein]-L-lysine = [E2 ubiquitin-conjugating enzyme]-L-cysteine + N(6)-ubiquitinyl-[acceptor protein]-L-lysine.. The protein operates within protein modification; protein ubiquitination. E3 ubiquitin-protein ligase that plays several important roles in innate immunity and adaptive immunity. Mediates ubiquitination of CD86 and MHC class II proteins, such as HLA-DR alpha and beta, and promotes their subsequent endocytosis and sorting to lysosomes via multivesicular bodies. Possesses a very broad antiviral activity by specifically inactivating different viral fusion proteins. Targets and ubiquitinates cytoplasmic lysine residues of viral envelope glycoproteins with single transmembrane domains leading to their lysosomal degradation. Therefore, shows broad-spectrum inhibition against many viruses including retroviruses, rhabdoviruses, arenaviruses, sarbecoviruses or influenzaviruses. Strongly blocks human immunodeficiency virus type 1 envelope glycoprotein incorporation into virions by down-regulating its cell surface expression. Also blocks ebola virus glycoprotein/GP incorporation via surface down-regulation. Mediates 'Lys-63'-linked polyubiquitination of influenza M2 to target it to lysosome for degradation. Mediates the regulation of constitutive ubiquitination and trafficking of the viral restriction factor BST2 within the endocytic pathway. Plays a role in maintenance of immune tolerance to self by promoting the turnover and proteasomal degradation of PD-L1/CD274 via ubiquitination. Catalyzes the 'Lys-63'-linked polyubiquitylation of cGAS thereby inhibiting its DNA binding ability and impairing its antiviral innate immunity. Negatively regulates IL7-mediated T-cell homeostasis by mediating 'Lys-27'-linked polyubiquitination of IL7R, leading to its lysosomal degradation. In terms of biological role, (Microbial infection) Mediates 'Lys-63'-linked polyubiquitination of hepatitis C virus/HCV protein NS2 which allows its binding to HGS, an ESCRT-0 complex component, and this interaction is essential for HCV envelopment. This is E3 ubiquitin-protein ligase MARCHF8 from Homo sapiens (Human).